We begin with the raw amino-acid sequence, 42 residues long: SELKDIIAAVTPCKGADFELQALKIRQPQGDEVLVKXXATGM.

The protein belongs to the zinc-containing alcohol dehydrogenase family. As to quaternary structure, homodimer. The cofactor is Zn(2+).

It catalyses the reaction an aromatic primary alcohol + NAD(+) = an aromatic aldehyde + NADH + H(+). In terms of biological role, oxidizes primary alcohols with an aromatic or cyclohex-1-ene ring. It is highly specific for benzyl alcohol. This chain is Aryl-alcohol dehydrogenase, found in Acinetobacter guillouiae (Acinetobacter genomosp. 11).